Consider the following 279-residue polypeptide: Lipid phosphate phosphatase epsilon 1, chloroplastic (279 aa).

A chloroplast-targeting transit peptide spans 1 to 88 (MAASSSLLLL…SFINNSSEIR (88 aa)). The next 5 membrane-spanning stretches (helical) occupy residues 126–142 (LWAV…SVVL), 164–184 (SHAQ…MEWL), 185–205 (GTNG…SYFI), 219–239 (VVVG…MWNS), and 255–275 (VFLF…LNWF).

The protein belongs to the PA-phosphatase related phosphoesterase family. As to expression, expressed in root tips, root branch points, cotyledons and leaves.

Its subcellular location is the plastid. The protein localises to the chloroplast inner membrane. With respect to regulation, inhibited by Mg(2+). In terms of biological role, exhibits phosphatidate phosphatase (PAP) activity in vitro. May play a secondary role as PAP in plastids. This is Lipid phosphate phosphatase epsilon 1, chloroplastic (LPPE1) from Arabidopsis thaliana (Mouse-ear cress).